A 325-amino-acid polypeptide reads, in one-letter code: MEKQAHKKFCWIIKNFSPQSERLYSVPVLIGDCKWRPIAYPIRDKYFSLCLQVVDFESLPCGWGRYVELRLTLRNQHNSLNLSIKADHCFDEKRTTWGIPIPERIPICKLQTELYQSEHVVKGDFKIIAEVDVFEAVGTLTESDISGKASELLTKKIRNDGNESGDLLKKTSPEKESNHVDVNGFQVLPSQVEYVRSIFERHPDIAVEFRAKNQHLRTSCMIFLLSLIETLCQSLEELSNEDLVEADIALTYVKDAGFKVDWLEKKLDQVKDKKEREQSGLARLHELEEYLLKLKQKCSNLDLLVEKENVELSATRTPMSFNDVV.

An MATH domain is found at 6–131 (HKKFCWIIKN…KGDFKIIAEV (126 aa)). The stretch at 258–306 (FKVDWLEKKLDQVKDKKEREQSGLARLHELEEYLLKLKQKCSNLDLLVE) forms a coiled coil.

The protein is MATH domain and coiled-coil domain-containing protein At3g58430 of Arabidopsis thaliana (Mouse-ear cress).